Consider the following 537-residue polypeptide: Tegument protein BRRF2 (537 aa).

Disordered regions lie at residues 322 to 466 and 486 to 537; these read PRFL…AEEF and GLRV…LSVV. Positions 334-347 are enriched in polar residues; sequence EPQQTCSQLTSRGN. Over residues 420 to 441 the composition is skewed to low complexity; sequence VTGSSQAAPSSSSVTPVASLSG. A compositionally biased stretch (acidic residues) spans 492 to 517; the sequence is DEDEDGSEDGEFSDLDLSDSDHEGDE.

This sequence belongs to the lymphocryptovirus BRRF2 family.

It is found in the virion tegument. This Homo sapiens (Human) protein is Tegument protein BRRF2.